The sequence spans 752 residues: DNA topoisomerase 4 subunit A (752 aa).

The Topo IIA-type catalytic domain occupies 31–494 (LPFIGDGLKP…EAKAMSEHDM (464 aa)). Tyrosine 120 functions as the O-(5'-phospho-DNA)-tyrosine intermediate in the catalytic mechanism. Disordered regions lie at residues 472–492 (YGDD…MSEH) and 718–752 (TGER…DSEE). Composition is skewed to basic and acidic residues over residues 473–492 (GDDR…MSEH) and 732–743 (QRIDRVEIDSPR).

The protein belongs to the type II topoisomerase GyrA/ParC subunit family. ParC type 1 subfamily. In terms of assembly, heterotetramer composed of ParC and ParE.

Its subcellular location is the cell membrane. It carries out the reaction ATP-dependent breakage, passage and rejoining of double-stranded DNA.. Its function is as follows. Topoisomerase IV is essential for chromosome segregation. It relaxes supercoiled DNA. Performs the decatenation events required during the replication of a circular DNA molecule. This chain is DNA topoisomerase 4 subunit A, found in Escherichia coli O157:H7.